The primary structure comprises 333 residues: Fructose-1,6-bisphosphatase class 1 (333 aa).

Residues E89, D112, L114, and D115 each coordinate Mg(2+). Substrate-binding positions include D115–S118, N208, Y241, and K271. E277 provides a ligand contact to Mg(2+).

Belongs to the FBPase class 1 family. Homotetramer. Requires Mg(2+) as cofactor.

The protein localises to the cytoplasm. It carries out the reaction beta-D-fructose 1,6-bisphosphate + H2O = beta-D-fructose 6-phosphate + phosphate. Its pathway is carbohydrate biosynthesis; gluconeogenesis. This Haemophilus influenzae (strain ATCC 51907 / DSM 11121 / KW20 / Rd) protein is Fructose-1,6-bisphosphatase class 1.